The chain runs to 168 residues: Large ribosomal subunit protein uL10 (168 aa).

Belongs to the universal ribosomal protein uL10 family. In terms of assembly, part of the ribosomal stalk of the 50S ribosomal subunit. The N-terminus interacts with L11 and the large rRNA to form the base of the stalk. The C-terminus forms an elongated spine to which L12 dimers bind in a sequential fashion forming a multimeric L10(L12)X complex.

Functionally, forms part of the ribosomal stalk, playing a central role in the interaction of the ribosome with GTP-bound translation factors. The sequence is that of Large ribosomal subunit protein uL10 from Lacticaseibacillus casei (strain BL23) (Lactobacillus casei).